Consider the following 130-residue polypeptide: ATP synthase epsilon chain (130 aa).

This sequence belongs to the ATPase epsilon chain family. In terms of assembly, F-type ATPases have 2 components, CF(1) - the catalytic core - and CF(0) - the membrane proton channel. CF(1) has five subunits: alpha(3), beta(3), gamma(1), delta(1), epsilon(1). CF(0) has three main subunits: a, b and c.

The protein localises to the cell inner membrane. Functionally, produces ATP from ADP in the presence of a proton gradient across the membrane. The sequence is that of ATP synthase epsilon chain from Pelagibacter ubique (strain HTCC1062).